Here is a 94-residue protein sequence, read N- to C-terminus: Co-chaperonin GroES (94 aa).

Belongs to the GroES chaperonin family. In terms of assembly, heptamer of 7 subunits arranged in a ring. Interacts with the chaperonin GroEL.

It localises to the cytoplasm. Together with the chaperonin GroEL, plays an essential role in assisting protein folding. The GroEL-GroES system forms a nano-cage that allows encapsulation of the non-native substrate proteins and provides a physical environment optimized to promote and accelerate protein folding. GroES binds to the apical surface of the GroEL ring, thereby capping the opening of the GroEL channel. In Bacillus cereus (strain ATCC 14579 / DSM 31 / CCUG 7414 / JCM 2152 / NBRC 15305 / NCIMB 9373 / NCTC 2599 / NRRL B-3711), this protein is Co-chaperonin GroES.